Here is a 376-residue protein sequence, read N- to C-terminus: UDP-N-acetylglucosamine 2-epimerase (376 aa).

Residues Arg10, Lys15, Asp95, Glu117, His213, Gln271, Phe276, 290–292 (SGG), Glu296, and Arg313 each bind substrate.

Belongs to the UDP-N-acetylglucosamine 2-epimerase family. In terms of assembly, homodimer.

The protein resides in the cytoplasm. The enzyme catalyses UDP-N-acetyl-alpha-D-glucosamine = UDP-N-acetyl-alpha-D-mannosamine. It functions in the pathway bacterial outer membrane biogenesis; enterobacterial common antigen biosynthesis. In terms of biological role, catalyzes the reversible epimerization at C-2 of UDP-N-acetylglucosamine (UDP-GlcNAc) and thereby provides bacteria with UDP-N-acetylmannosamine (UDP-ManNAc), the activated donor of ManNAc residues. In Yersinia pestis, this protein is UDP-N-acetylglucosamine 2-epimerase.